The sequence spans 591 residues: Reduced folate transporter (591 aa).

Residue methionine 1 is modified to N-acetylmethionine. Topologically, residues methionine 1–valine 29 are cytoplasmic. Position 5 is a phosphoserine (serine 5). A helical membrane pass occupies residues cysteine 30–proline 50. Residues isoleucine 48 and threonine 49 each contribute to the folate site. Topologically, residues tyrosine 51 to valine 64 are extracellular. N-linked (GlcNAc...) asparagine glycosylation occurs at asparagine 58. The chain crosses the membrane as a helical span at residues threonine 65–threonine 87. The Cytoplasmic portion of the chain corresponds to aspartate 88–arginine 91. The helical transmembrane segment at tyrosine 92–leucine 112 threads the bilayer. Topologically, residues glycine 113 to valine 116 are extracellular. The chain crosses the membrane as a helical span at residues alanine 117–tyrosine 139. 2 residues coordinate folate: glutamate 123 and arginine 133. The 2',3'-cGAMP site is built by arginine 133, isoleucine 134, serine 137, tyrosine 149, and arginine 157. Over isoleucine 140–alanine 153 the chain is Cytoplasmic. A helical membrane pass occupies residues glycine 154–glycine 178. Valine 164 contacts folate. Topologically, residues arginine 179–serine 183 are extracellular. A helical transmembrane segment spans residues threonine 184 to phenylalanine 202. Residues leucine 203–glutamine 266 lie on the Cytoplasmic side of the membrane. A Phosphoserine modification is found at serine 225. A helical membrane pass occupies residues leucine 267–tryptophan 292. Residues tyrosine 281, tyrosine 282, and tyrosine 286 each contribute to the folate site. Residue tyrosine 282 coordinates 2',3'-cGAMP. Residues asparagine 293–valine 304 lie on the Extracellular side of the membrane. A helical transmembrane segment spans residues tyrosine 305–valine 327. Serine 321 provides a ligand contact to 2',3'-cGAMP. Residues lysine 328–arginine 333 are Cytoplasmic-facing. The helical transmembrane segment at tryptophan 334–alanine 354 threads the bilayer. Topologically, residues histidine 355–serine 360 are extracellular. Residues serine 361–threonine 384 traverse the membrane as a helical segment. Folate contacts are provided by arginine 373 and glutamine 377. 2',3'-cGAMP is bound by residues glutamine 377, proline 381, threonine 384, lysine 393, cysteine 396, and phenylalanine 400. Over phenylalanine 385–leucine 398 the chain is Cytoplasmic. The chain crosses the membrane as a helical span at residues valine 399–arginine 422. A required for substrate-binding region spans residues alanine 407 to serine 419. Over glycine 423–lysine 430 the chain is Extracellular. Residues glutamine 431–leucine 455 traverse the membrane as a helical segment. Residues arginine 456–glutamine 591 are Cytoplasmic-facing. 4 positions are modified to phosphoserine: serine 474, serine 485, serine 499, and serine 503.

Belongs to the reduced folate carrier (RFC) transporter (TC 2.A.48) family. As to expression, placenta, liver, and to a much smaller extent, in lung.

It localises to the cell membrane. Its subcellular location is the apical cell membrane. The protein resides in the basolateral cell membrane. It carries out the reaction 5-amino-1-(5-phospho-beta-D-ribosyl)imidazole-4-carboxamide(in) + (6S)-5-methyl-5,6,7,8-tetrahydrofolate(out) = 5-amino-1-(5-phospho-beta-D-ribosyl)imidazole-4-carboxamide(out) + (6S)-5-methyl-5,6,7,8-tetrahydrofolate(in). It catalyses the reaction 2',3'-cGAMP(out) + 5-amino-1-(5-phospho-beta-D-ribosyl)imidazole-4-carboxamide(in) = 2',3'-cGAMP(in) + 5-amino-1-(5-phospho-beta-D-ribosyl)imidazole-4-carboxamide(out). The catalysed reaction is 3',3'-cGAMP(out) + 5-amino-1-(5-phospho-beta-D-ribosyl)imidazole-4-carboxamide(in) = 3',3'-cGAMP(in) + 5-amino-1-(5-phospho-beta-D-ribosyl)imidazole-4-carboxamide(out). In terms of biological role, antiporter that mediates the import of reduced folates or a subset of cyclic dinucleotides, driven by the export of organic anions. Acts as an importer of immunoreactive cyclic dinucleotides, such as cyclic GMP-AMP (2'-3'-cGAMP), an immune messenger produced in response to DNA virus in the cytosol, and its linkage isomer 3'-3'-cGAMP, thus playing a role in triggering larger immune responses. Mechanistically, acts as a secondary active transporter, which exports intracellular organic anions down their concentration gradients to facilitate the uptake of its substrates. Has high affinity for N5-methyltetrahydrofolate, the predominant circulating form of folate. Also mediates the import of antifolate drug methotrexate. 5-amino-4-imidazolecarboxamide riboside (AICAR), when phosphorylated to AICAR monophosphate, can serve as an organic anion for antiporter activity. The polypeptide is Reduced folate transporter (Homo sapiens (Human)).